The chain runs to 56 residues: Large ribosomal subunit protein bL33 (56 aa).

It belongs to the bacterial ribosomal protein bL33 family.

The polypeptide is Large ribosomal subunit protein bL33 (Histophilus somni (strain 129Pt) (Haemophilus somnus)).